We begin with the raw amino-acid sequence, 517 residues long: GMP synthase [glutamine-hydrolyzing] (517 aa).

The Glutamine amidotransferase type-1 domain occupies 9-199 (RILILDFGSQ…VLGVCGCERL (191 aa)). Cys-86 (nucleophile) is an active-site residue. Catalysis depends on residues His-173 and Glu-175. A GMPS ATP-PPase domain is found at 200-392 (WTSESIIEDA…LGLPYEMLYR (193 aa)). 227–233 (SGGVDSS) serves as a coordination point for ATP.

As to quaternary structure, homodimer.

The enzyme catalyses XMP + L-glutamine + ATP + H2O = GMP + L-glutamate + AMP + diphosphate + 2 H(+). Its pathway is purine metabolism; GMP biosynthesis; GMP from XMP (L-Gln route): step 1/1. Catalyzes the synthesis of GMP from XMP. This chain is GMP synthase [glutamine-hydrolyzing], found in Vibrio vulnificus (strain YJ016).